A 254-amino-acid polypeptide reads, in one-letter code: Mannose-binding protein (254 aa).

The signal sequence occupies residues 1–19 (MTLLQPFSALLLCLSLMMA). A disordered region spans residues 46-99 (NGLPGRDGRDGPKGEKGDPGEGLRGLQGLPGKAGPQGLKGEVGPQGEKGQKGER). Positions 51–66 (RDGRDGPKGEKGDPGE) are enriched in basic and acidic residues. The residue at position 57 (P57) is a 4-hydroxyproline. A 5-hydroxylysine mark is found at K58 and K61. 2 O-linked (Gal...) hydroxylysine glycosylation sites follow: K58 and K61. P75 carries the post-translational modification 4-hydroxyproline. K93 and K96 each carry 5-hydroxylysine. Positions 140–250 (VGKKMFVSTG…LDCSNSNIFI (111 aa)) constitute a C-type lectin domain. 2 cysteine pairs are disulfide-bonded: C161-C252 and C229-C243.

In terms of assembly, oligomeric complex of 3 or more homotrimers.

It is found in the secreted. In terms of biological role, calcium-dependent lectin involved in innate immune defense. Binds mannose, fucose and N-acetylglucosamine on different microorganisms and activates the lectin complement pathway. The protein is Mannose-binding protein of Gallus gallus (Chicken).